Consider the following 5478-residue polypeptide: Mucin-12 (5478 aa).

The first 16 residues, 1 to 16 (MLVIWILTLALRLCAS), serve as a signal peptide directing secretion. Topologically, residues 17–5380 (VTTVTPEGSA…EFNIAKSLVY (5364 aa)) are extracellular. Residues N154, N170, and N176 are each glycosylated (N-linked (GlcNAc...) asparagine). Residues 212 to 737 (LDSSTNSGHS…GSTETTLLPD (526 aa)) form a disordered region. Copy 1 of the repeat occupies 222–240 (EESTVSHSGPGATGTTLFP). Residues 222–4761 (EESTVSHSGP…PGSTQTMHFP (4540 aa)) form a 28 X 19 AA approximate tandem repeats of E-E-S-X-X-X-H-X-X-P-X-X-T-X-T-X-X-X-P region. Composition is skewed to polar residues over residues 226 to 246 (VSHSGPGATGTTLFPSHSATS), 255 to 288 (SPITSASMETTALPGSTTTAGLSEKSTTFYSSPR), 296 to 313 (PARTTSSGVSEKSTTSHS), and 325 to 342 (DSTTMPGVSQESTASHSI). A compositionally biased stretch (low complexity) spans 343–366 (PGSTDTTLSPGTTTPSSLGPESTT). Residues 367 to 387 (FHSSPGYTKTTRLPDNTTTSG) are compositionally biased toward polar residues. N-linked (GlcNAc...) asparagine glycosylation is present at N382. A compositionally biased stretch (low complexity) spans 396–413 (HSSTGSPHTTLSPSSSTT). Residues 419–440 (TTFQSWPSSKDTSPAPSGTTSA) are compositionally biased toward polar residues. Low complexity-rich tracts occupy residues 445–466 (STTYHSSPSSTPTTHFSASSTT) and 478–495 (SSPVATATTPPPARSATS). 2 tandem repeats follow at residues 471-489 (EESTPVHSSPVATATTPPP) and 499-517 (EESTAYHRSPGSTQTMHFP). Residues 531-554 (TFHGSTTHTKSSTPSTTAALAHTS) are compositionally biased toward low complexity. 2 stretches are compositionally biased toward polar residues: residues 555-575 (YHSSLGSTETTHFRDSSTISG) and 608-648 (STPS…SPDT). The segment covering 654 to 669 (SMTSSGVSEESTTSHS) has biased composition (low complexity). The stretch at 662-680 (EESTTSHSRPGSTHTTAFP) is repeat 4. Polar residues-rich tracts occupy residues 670 to 715 (RPGS…TASS) and 722 to 737 (TFHSRPGSTETTLLPD). N738 carries N-linked (GlcNAc...) asparagine glycosylation. 4 disordered regions span residues 749–4847 (MPVH…HFTT), 4887–5034 (SSRS…THTV), 5048–5071 (STAFHSSSDATGTTPLPARSTASD), and 5093–5112 (ASSSTSGLTEESTTFHTSPS). Composition is skewed to polar residues over residues 751 to 783 (VHSSTRSPHTTLSPAGSTTRQGESTTFHSWPSS) and 792 to 842 (TTTS…TQTM). Residues 827 to 845 (EESTTYHSSPGSTQTMHFP) form repeat 5. Residues 859-877 (TSHSSTTHTISSAPSTTSA) show a composition bias toward low complexity. 2 stretches are compositionally biased toward polar residues: residues 884–899 (SYHSSPGSTATTHFPD) and 928–970 (RSTT…TTFH). Residues 971–1007 (SSPRSPATTLSPASTTSSGVSEESTTSRSRPGSTHTT) are compositionally biased toward low complexity. Residues 1009–1021 (FPDSTTTPGLSRH) are compositionally biased toward polar residues. The span at 1022 to 1065 (STTSHSSPGSTDTTLLPASTTTSGPSQESTTSHSSSGSTDTALS) shows a compositional bias: low complexity. Polar residues-rich tracts occupy residues 1066-1101 (PGSTTALSFGQESTTFHSNPGSTHTTLFPDSTTSSG) and 1108-1138 (RVHSSTGSPRTTLSPASSTSPGLQGESTAFQ). Over residues 1139–1157 (THPASTHTTPSPPSTATAP) the composition is skewed to low complexity. The stretch at 1159–1177 (EESTTYHRSPGSTPTTHFP) is repeat 6. 2 stretches are compositionally biased toward polar residues: residues 1160–1184 (ESTTYHRSPGSTPTTHFPASSTTSG) and 1191–1207 (IFHSSPDASGTTPSSAH). 3 stretches are compositionally biased toward low complexity: residues 1208-1220 (STTSGRGESTTSR), 1229-1241 (TTLPGSTTTPGLS), and 1249-1262 (SSPRSPTTTLSPAS). 3 stretches are compositionally biased toward polar residues: residues 1271 to 1324 (ESTT…TTSV), 1331 to 1357 (TFHSRPASTHTTLFTEDSTTSGLTEES), and 1364 to 1377 (PASTQTGLPATLTT). Composition is skewed to low complexity over residues 1384-1396 (STTFPSSSGSTGT) and 1411-1438 (ESTPSRLSPSSTETTTLPGSPTTPSLSE). The segment covering 1439 to 1448 (KSTTFYTSPR) has biased composition (polar residues). Residues 1458-1481 (TTTSSGVSEESSTSHSQPGSTHTT) are compositionally biased toward low complexity. Repeat unit 7 spans residues 1466-1484 (EESSTSHSQPGSTHTTAFP). A compositionally biased stretch (polar residues) spans 1483 to 1537 (FPDSTTTSDLSQEPTTSHSSQGSTEATLSPGSTTASSLGQQSTTFHSSPGDTETT). Low complexity predominate over residues 1552 to 1568 (STPTHSSTGSLHTTLTP). Composition is skewed to polar residues over residues 1569–1586 (ASSTSAGLQEESTTFQSW) and 1606–1630 (VSTTYHSRPSSTPTTHFSASSTTLG). Repeat 8 spans residues 1633–1651 (EESTTVHSSPGATGTALFP). Residues 1653–1708 (RSATSVLVGEPTTSPISSGSTETTALPGSTTTAGLSEKSTTFYSSPRSPDTTLSPA) show a composition bias toward polar residues. The segment covering 1709 to 1724 (STTSSGVSEESTTSHS) has biased composition (low complexity). Repeat unit 9 spans residues 1717-1735 (EESTTSHSRPGSTHTTAFP). Composition is skewed to polar residues over residues 1725 to 1797 (RPGS…TTAS) and 1805 to 1840 (PVHSSTGSPHTTLSPAGSTTRQGESTTFQSWPSSKD). N1793 is a glycosylation site (N-linked (GlcNAc...) asparagine). Composition is skewed to low complexity over residues 1856-1877 (STTSHGSPSSTPTTHFSASSTT) and 1889-1906 (SSPVATATTPSPARSTTS). Repeat copies occupy residues 1882–1900 (EESTTVHSSPVATATTPSP) and 1910–1928 (EESTAYHSSPGSTQTMHFP). Residues 1914-1935 (AYHSSPGSTQTMHFPESSTASG) are compositionally biased toward polar residues. Over residues 1943 to 1959 (SHSSTTHTISSPPSTTS) the composition is skewed to low complexity. 2 stretches are compositionally biased toward polar residues: residues 1967–1982 (SYHSSPGSTATTHFPD) and 2011–2053 (RSTT…TTFH). Low complexity predominate over residues 2054 to 2082 (SSPRSPATTLSPASTTSSGVSEESTTSHS). Copy 12 of the repeat occupies 2075–2093 (EESTTSHSRPGSTHTTAFP). Residues 2083-2104 (RPGSTHTTAFPDSTTTPGLSRH) show a composition bias toward polar residues. The segment covering 2105–2130 (STTSHSSPGSTDTTLLPASTTTSGPS) has biased composition (low complexity). Polar residues-rich tracts occupy residues 2131–2184 (QEST…TSSG) and 2191–2221 (RVHSSTGSPRTTLSPASSTSPGLQGESTAFQ). Low complexity predominate over residues 2222–2240 (THPASTHTTPSPPSTATAP). Residues 2242–2260 (EESTTYHRSPGSTPTTHFP) form repeat 13. 2 stretches are compositionally biased toward polar residues: residues 2243 to 2267 (ESTTYHRSPGSTPTTHFPASSTTSG) and 2274 to 2290 (IFHSSPDASGTTPSSAH). Composition is skewed to low complexity over residues 2291–2303 (STTSGRGESTTSR), 2312–2324 (TTLPGSTTTPGLS), and 2332–2345 (SSPRSPTTTLSPAS). The span at 2354–2392 (ESTTSRSQPGSTHSTVSPASTTTPGLSEESTTVYSSSPG) shows a compositional bias: polar residues. A compositionally biased stretch (low complexity) spans 2393–2407 (STETTVFPRTPTTSV). 2 stretches are compositionally biased toward polar residues: residues 2414–2440 (TFHSRPASTHTTLFTEDSTTSGLTEES) and 2447–2460 (PASTQTGLPATLTT). 2 stretches are compositionally biased toward low complexity: residues 2467 to 2483 (STTFPSSSGSTGTTLSP) and 2494 to 2521 (ESTPSRLSPSSTETTTLPGSPTTPSLSE). Polar residues predominate over residues 2522-2531 (KSTTFYTSPR). A compositionally biased stretch (low complexity) spans 2541–2564 (TTTSSGVSEESSTSHSQPGSTHTT). Repeat unit 14 spans residues 2549 to 2567 (EESSTSHSQPGSTHTTAFP). Residues 2566-2578 (FPDSTTTPGLSRH) are compositionally biased toward polar residues. Low complexity predominate over residues 2579-2604 (STTSHSSPGSTDTTLLPASTTTSGPS). Composition is skewed to polar residues over residues 2605 to 2658 (QEST…TSSG) and 2665 to 2695 (RVHSSTGSPRTTLSPASSTSPGLQGESTTFQ). Positions 2696–2714 (THPASTHTTPSPPSTATAP) are enriched in low complexity. Repeat 15 spans residues 2716–2734 (EESTTYHRSPGSTPTTHFP). 2 stretches are compositionally biased toward polar residues: residues 2717–2741 (ESTTYHRSPGSTPTTHFPASSTTSG) and 2748–2764 (IFHSSPDASGTTPSSAH). Composition is skewed to low complexity over residues 2765–2777 (STTSGRGESTTSR), 2786–2798 (TTLPGSTTTPGLS), and 2806–2819 (SSPRSPTTTLSPAS). 3 stretches are compositionally biased toward polar residues: residues 2828 to 2881 (ESTT…TTSV), 2888 to 2914 (TFHSRPASTHTTLFTEDSTTSGLTEES), and 2921 to 2934 (PASTQTGLPATLTT). Composition is skewed to low complexity over residues 2941–2957 (STTFPSSSGSTGTTLSP) and 2968–2995 (ESTPSRLSPSSTETTTLPGSPTTPSLSE). Residues 2996–3005 (KSTTFYTSPR) are compositionally biased toward polar residues. Residues 3015 to 3038 (TTTSSGVSEESSTSHSQPGSTHTT) show a composition bias toward low complexity. Copy 16 of the repeat occupies 3023–3041 (EESSTSHSQPGSTHTTAFP). Residues 3040-3094 (FPDSTTTSGLSQEPTASHSSQGSTEATLSPGSTTASSLGQQSTTFHSSPGDTETT) show a composition bias toward polar residues. The span at 3109–3125 (STPTHSSTGSLHTTLTP) shows a compositional bias: low complexity. 2 stretches are compositionally biased toward polar residues: residues 3126–3143 (ASSTSAGLQEESTTFQSW) and 3163–3187 (VSTTYHSRPSSTPTTHFSASSTTLG). The stretch at 3190–3208 (EESTTVHSSPGATGTALFP) is repeat 17. The segment covering 3210-3265 (RSATSVLVGEPTTSPISSGSTETTALPGSTTTAGLSEKSTTFYSSPRSPDTTLSPA) has biased composition (polar residues). Residues 3266 to 3281 (STTSSGVSEESTTSHS) are compositionally biased toward low complexity. Repeat unit 18 spans residues 3274-3292 (EESTTSHSRPGSTHTTAFP). 2 stretches are compositionally biased toward polar residues: residues 3282–3354 (RPGS…TTAS) and 3362–3397 (PVHSSTGSPHTTLSPAGSTTRQGESTTFQSWPNSKD). N3350 carries N-linked (GlcNAc...) asparagine glycosylation. Low complexity-rich tracts occupy residues 3413 to 3434 (STTSHGSPSSTPTTHFSASSTT) and 3446 to 3463 (SSPVATATTPSPARSTTS). Tandem repeats lie at residues 3439–3457 (EESTTVHSSPVATATTPSP) and 3467–3485 (EESTTYHSSPGSTQTMHFP). Residues 3468–3482 (ESTTYHSSPGSTQTM) show a composition bias toward polar residues. The segment covering 3499–3517 (TSHSSTTHTISSAPSTTSA) has biased composition (low complexity). Composition is skewed to polar residues over residues 3524–3539 (SYHSSPGSTATTHFPD) and 3568–3610 (RSTT…TTFH). A compositionally biased stretch (low complexity) spans 3611–3639 (SSPRSPATTLSPASTTSSGVSEESTTSHS). The stretch at 3632-3650 (EESTTSHSRPGSTHTTAFP) is repeat 21. The span at 3640–3661 (RPGSTHTTAFPDSTTTPGLSRH) shows a compositional bias: polar residues. A compositionally biased stretch (low complexity) spans 3662–3705 (STTSHSSPGSTDTTLLPASTTTSGSSQESTTSHSSSGSTDTALS). 2 stretches are compositionally biased toward polar residues: residues 3706–3741 (PGSTTALSFGQESTTFHSSPGSTHTTLFPDSTTSSG) and 3748–3778 (RVHSSTGSPRTTLSPASSTSPGLQGESTAFQ). Residues 3779-3797 (THPASTHTTPSPPSTATAP) are compositionally biased toward low complexity. Repeat 22 spans residues 3799–3817 (EESTTYHRSPGSTPTTHFP). 2 stretches are compositionally biased toward polar residues: residues 3800–3824 (ESTTYHRSPGSTPTTHFPASSTTSG) and 3831–3847 (IFHSSPDASGTTPSSAH). Composition is skewed to low complexity over residues 3848–3860 (STTSGRGESTTSR), 3869–3881 (TTLPGSTTTPGLS), and 3889–3902 (SSPRSPTTTLSPAS). Composition is skewed to polar residues over residues 3911-3963 (ESTT…TTTS), 3971-3997 (TFHSRPASTHTTLFTEDSTTSGLTEES), and 4004-4017 (PASTQTGLPATLTT). Low complexity-rich tracts occupy residues 4024–4036 (STTFPSSSGSTGT) and 4051–4078 (ESTPSRLSPSSTETTTLPGSPTTPSLSE). Over residues 4079–4088 (KSTTFYTSPR) the composition is skewed to polar residues. A compositionally biased stretch (low complexity) spans 4098-4121 (TTTSSGVSEESSTSHSQPGSTHTT). Residues 4106–4124 (EESSTSHSQPGSTHTTAFP) form repeat 23. Positions 4123–4177 (FPDSTTTSGLSQEPTTSHSSQGSTEATLSPGSTTASSLGQQSTTFHSSPGDTETT) are enriched in polar residues. The segment covering 4192-4208 (STPTHSSTGSLHTTLTP) has biased composition (low complexity). A compositionally biased stretch (polar residues) spans 4209-4226 (ASSTSTGLQEESTTFQSW). Over residues 4227–4249 (PSSSDTTPSPPSTTAVPVEVSTT) the composition is skewed to low complexity. A compositionally biased stretch (polar residues) spans 4250-4270 (YHSRPSSTPTTHFSASSTTLG). Repeat unit 24 spans residues 4273–4291 (EESTTVHSSPGATGTALFP). Positions 4293 to 4348 (RSATSVLVGEPTTSPISSGSTETTALPGSTTTAGLSEKSTTFYSSPRSPDTTLSPA) are enriched in polar residues. Residues 4349–4364 (STTSSGVSEESTTSHS) show a composition bias toward low complexity. Polar residues-rich tracts occupy residues 4369–4437 (MHTT…TTAS) and 4445–4480 (PVHSSTGSPHTTLSPAGSTTRQGESTTFQSWPNSKD). N-linked (GlcNAc...) asparagine glycosylation is present at N4433. Composition is skewed to low complexity over residues 4496–4517 (STTSHGSPSSTPTTHFSASSTT) and 4529–4546 (SSPVATATTPSPARSTTS). 2 consecutive repeat copies span residues 4522-4540 (EESTTVHSSPVATATTPSP) and 4550-4568 (EESTTYHSSPGSTQTMHFP). Over residues 4551 to 4571 (ESTTYHSSPGSTQTMHFPESN) the composition is skewed to polar residues. An N-linked (GlcNAc...) asparagine glycan is attached at N4571. The segment covering 4582-4600 (TSHSSTTHTISSAPSTTSA) has biased composition (low complexity). Composition is skewed to polar residues over residues 4607-4622 (SYHSSPGSTATTHFPD) and 4651-4688 (RSTTSVLLGESTTSPISSGSMETTALPGSTTTPGLSEK). 2 stretches are compositionally biased toward low complexity: residues 4689-4710 (STTFHSSPSSTPTTHFSASSTT) and 4722-4739 (SSPVATATTPSPARSTTS). Tandem repeats lie at residues 4715 to 4733 (EESTTVHSSPVATATTPSP) and 4743 to 4761 (EESTAYHSSPGSTQTMHFP). Residues 4747–4768 (AYHSSPGSTQTMHFPESSTASG) are compositionally biased toward polar residues. A compositionally biased stretch (low complexity) spans 4776–4792 (SHSSTTHTISSPPSTTS). Composition is skewed to polar residues over residues 4800-4814 (SYHSSPGSIATTHFP) and 4887-4917 (SSRSPDQTLSPASMTSSSISGEPTSLYSQAE). Residues 4918–4931 (STHTTAFPASTTTS) show a composition bias toward low complexity. Composition is skewed to polar residues over residues 4932-5024 (GLSQ…STPF) and 5048-5061 (STAFHSSSDATGTT). The segment covering 5094-5112 (SSSTSGLTEESTTFHTSPS) has biased composition (low complexity). Residues 5116 to 5154 (TIVSTESLETLAPGLCQEGQIWNGKQCVCPQGYVGYQCL) enclose the EGF-like domain. Cysteines 5144 and 5153 form a disulfide. The SEA domain maps to 5168-5275 (LNATLGMTVK…TRTTLLDPDS (108 aa)). N-linked (GlcNAc...) asparagine glycosylation is found at N5169, N5182, N5197, N5228, and N5264. The Cleavage motif signature appears at 5226 to 5233 (LLNGSIVV). Residues 5381–5401 (GIVGAVMAVLLLALIILIILF) form a helical membrane-spanning segment. The Cytoplasmic portion of the chain corresponds to 5402-5478 (SLSQRKRHRE…QRPEMVASTV (77 aa)).

Ubiquitous, with higher expression in colon. Down-regulated in colorectal cancer as well as in the colon of patients with ulcerative colitis (UC) and Crohn's disease (CD).

The protein localises to the membrane. In terms of biological role, involved in epithelial cell protection, adhesion modulation, and signaling. May be involved in epithelial cell growth regulation. Stimulated by both cytokine TNF-alpha and TGF-beta in intestinal epithelium. This is Mucin-12 (MUC12) from Homo sapiens (Human).